The chain runs to 367 residues: Chorismate synthase (367 aa).

Residue R48 coordinates NADP(+). FMN-binding positions include R125–S127, G284, K299–S303, and R325.

The protein belongs to the chorismate synthase family. In terms of assembly, homotetramer. FMNH2 serves as cofactor.

The enzyme catalyses 5-O-(1-carboxyvinyl)-3-phosphoshikimate = chorismate + phosphate. The protein operates within metabolic intermediate biosynthesis; chorismate biosynthesis; chorismate from D-erythrose 4-phosphate and phosphoenolpyruvate: step 7/7. In terms of biological role, catalyzes the anti-1,4-elimination of the C-3 phosphate and the C-6 proR hydrogen from 5-enolpyruvylshikimate-3-phosphate (EPSP) to yield chorismate, which is the branch point compound that serves as the starting substrate for the three terminal pathways of aromatic amino acid biosynthesis. This reaction introduces a second double bond into the aromatic ring system. In Lachnoclostridium phytofermentans (strain ATCC 700394 / DSM 18823 / ISDg) (Clostridium phytofermentans), this protein is Chorismate synthase.